A 391-amino-acid polypeptide reads, in one-letter code: MAIINMSDLDLQGKRVLIREDLNVPVSNGVVTSDARLRASLPTIELALAKGAAVMVMSHLGRPTEGEYNSEFSMQPVVDYLAKALSCTVRLATDYLDGVEVAVGEVVVFENVRFNKGEKKNDEALSKKMAALCDVYVMDAFGTAHRAEASTNGVGLHAPIACAGPLLAQELEALGKALDNPARPLVAIVGGSKVSTKLTVLESLSGIVDQLVVGGGIANTFIAAAGHNVGKSLYEADLIDEAKRLVANAQSRGGDIPVPTDVVVAGEFSPTAAATLKAVNEVGDSDMIFDIGPDSAEALAKIIESAGTIVWNGPVGVFEFDQFGEGTKRIAQAIADSKAFSIAGGGDTLAAVDKYDIADKVSYISTGGGAFLEFLEGKELPAVAMLKQRGA.

Substrate-binding positions include 21-23 (DLN), Arg-36, 59-62 (HLGR), Arg-113, and Arg-146. Residues Lys-197, Glu-319, and 345–348 (GGDT) contribute to the ATP site.

The protein belongs to the phosphoglycerate kinase family. In terms of assembly, monomer.

The protein resides in the cytoplasm. The catalysed reaction is (2R)-3-phosphoglycerate + ATP = (2R)-3-phospho-glyceroyl phosphate + ADP. It participates in carbohydrate degradation; glycolysis; pyruvate from D-glyceraldehyde 3-phosphate: step 2/5. In Shewanella sp. (strain MR-7), this protein is Phosphoglycerate kinase.